A 221-amino-acid polypeptide reads, in one-letter code: Protein-L-isoaspartate O-methyltransferase (221 aa).

Residue S60 is part of the active site.

This sequence belongs to the methyltransferase superfamily. L-isoaspartyl/D-aspartyl protein methyltransferase family.

It is found in the cytoplasm. It catalyses the reaction [protein]-L-isoaspartate + S-adenosyl-L-methionine = [protein]-L-isoaspartate alpha-methyl ester + S-adenosyl-L-homocysteine. In terms of biological role, catalyzes the methyl esterification of L-isoaspartyl residues in peptides and proteins that result from spontaneous decomposition of normal L-aspartyl and L-asparaginyl residues. It plays a role in the repair and/or degradation of damaged proteins. The chain is Protein-L-isoaspartate O-methyltransferase from Rhodospirillum centenum (strain ATCC 51521 / SW).